The sequence spans 188 residues: dCTP deaminase (188 aa).

DCTP-binding positions include 111–116, 135–137, Gln-156, Tyr-170, and Gln-180; these read KSTYAR and TLE. The active-site Proton donor/acceptor is the Glu-137.

It belongs to the dCTP deaminase family. Homotrimer.

It carries out the reaction dCTP + H2O + H(+) = dUTP + NH4(+). The protein operates within pyrimidine metabolism; dUMP biosynthesis; dUMP from dCTP (dUTP route): step 1/2. Its function is as follows. Catalyzes the deamination of dCTP to dUTP. This is dCTP deaminase from Azoarcus sp. (strain BH72).